A 45-amino-acid chain; its full sequence is Large ribosomal subunit protein bL34 (45 aa).

The tract at residues 1-45 (MTKRTLGGTVRKQKRTSGFRARMRSHTGQNVIRARRKKGRHRLTV) is disordered. 2 stretches are compositionally biased toward basic residues: residues 11 to 25 (RKQK…RMRS) and 33 to 45 (RARR…RLTV).

Belongs to the bacterial ribosomal protein bL34 family.

The protein is Large ribosomal subunit protein bL34 of Picosynechococcus sp. (strain ATCC 27264 / PCC 7002 / PR-6) (Agmenellum quadruplicatum).